The primary structure comprises 164 residues: Phosphopantetheine adenylyltransferase (164 aa).

S9 contacts substrate. ATP contacts are provided by residues 9–10 (SF) and H17. Substrate-binding residues include K41, V78, and R92. Residues 93–95 (GLR), E103, and 128–134 (SRPITAT) contribute to the ATP site.

The protein belongs to the bacterial CoaD family. As to quaternary structure, homohexamer. The cofactor is Mg(2+).

It is found in the cytoplasm. The enzyme catalyses (R)-4'-phosphopantetheine + ATP + H(+) = 3'-dephospho-CoA + diphosphate. The protein operates within cofactor biosynthesis; coenzyme A biosynthesis; CoA from (R)-pantothenate: step 4/5. Functionally, reversibly transfers an adenylyl group from ATP to 4'-phosphopantetheine, yielding dephospho-CoA (dPCoA) and pyrophosphate. The protein is Phosphopantetheine adenylyltransferase of Sinorhizobium fredii (strain NBRC 101917 / NGR234).